Here is a 726-residue protein sequence, read N- to C-terminus: Transmembrane channel-like protein 8 (726 aa).

The Cytoplasmic segment spans residues Met-1 to Arg-114. A Phosphoserine modification is found at Ser-6. Residues Phe-115–Leu-135 form a helical membrane-spanning segment. Residues Val-136 to Ser-200 are Lumenal-facing. N-linked (GlcNAc...) asparagine glycosylation is present at Asn-148. A helical membrane pass occupies residues Ile-201–Leu-221. The Cytoplasmic segment spans residues Arg-222–Tyr-299. A helical transmembrane segment spans residues Leu-300–Ala-320. The Lumenal portion of the chain corresponds to Thr-321–Tyr-338. Residues Leu-339–Val-359 form a helical membrane-spanning segment. Topologically, residues Gln-360–Glu-426 are cytoplasmic. The segment at Glu-362 to Ser-530 is TMC domain. The helical transmembrane segment at Leu-427–Leu-447 threads the bilayer. Residues Pro-448–Gly-488 are Lumenal-facing. The helical transmembrane segment at Leu-489–Ile-509 threads the bilayer. The Cytoplasmic segment spans residues Lys-510 to Thr-531. A helical membrane pass occupies residues Phe-532–Val-552. Over Val-553–Leu-594 the chain is Lumenal. N-linked (GlcNAc...) asparagine glycosylation occurs at Asn-567. A helical transmembrane segment spans residues Gly-595–Val-615. Topologically, residues Ser-616 to Leu-726 are cytoplasmic. A disordered region spans residues Pro-651–Leu-726. Pro residues predominate over residues Glu-652–Lys-662. Phosphoserine is present on residues Ser-658 and Ser-673.

This sequence belongs to the TMC family. In terms of assembly, interacts with TMC6. Interacts and forms a complex with TMC6 and CIB1; the interaction stabilizes each component of the complex. Interacts and forms a complex with TMC6 and SLC30A1/ZNT1; the interaction regulates zinc transport into the ER. Interacts with TRADD; the interaction competes with TRADD/RIPK1/TRAF2/cIAPs complex I formation and facilites complex II formation. As to quaternary structure, (Microbial infection) Interacts with human papillomavirus 16/HPV16 protein E5; the interaction alleviates TMC8-mediated transcription factors inhibition. Expressed in placenta, prostate and testis.

The protein localises to the endoplasmic reticulum membrane. The protein resides in the golgi apparatus membrane. Its subcellular location is the nucleus membrane. Functionally, acts as a regulatory protein involved in the regulation of numerous cellular processes. Together with its homolog TMC6/EVER1, forms a complex with calcium-binding protein CIB1 in lymphocytes and keratynocytes where TMC6 and TMC8 stabilize CIB1 levels and reciprocally. Together with TMC6, also forms a complex with and activates zinc transporter ZNT1 at the ER membrane of keratynocytes, thereby facilitating zinc uptake into the ER. Also inhibits receptor-mediated calcium release from ER stores and calcium activated and volume regulated chloride channels. Down-regulates the activity of transcription factors induced by zinc and cytokines. Also sequesters TRADD which impairs the recruitment of TRAF2 and RIPK1 in the pro-survival complex I and promotes proapoptotic complex II formation, and may therefore be involved in TNF-induced cell death/survival decisions. The sequence is that of Transmembrane channel-like protein 8 from Homo sapiens (Human).